The primary structure comprises 830 residues: Ribosome biogenesis protein ERB1 (830 aa).

Residues 1–142 (MAPQPLKVGT…NKDLPVDEKL (142 aa)) are disordered. 2 stretches are compositionally biased toward acidic residues: residues 35–44 (VSEESDEEFG) and 52–109 (MSDD…DSDS). The span at 131 to 142 (EENKDLPVDEKL) shows a compositional bias: basic and acidic residues. 6 WD repeats span residues 481–520 (PGDTRVRSVSTSPDGQWIASGSEDGVVRVWDLGNGREVWR), 523–563 (LHAG…APHI), 660–698 (KTPGTIQRVAFHPSKPHFFAATQRYIRLYDLAAQKLIRT), 701–740 (SGVKWISSMDVHSGGDNLIIGSYDKKLAWFDMDLSAKPYK), 744–783 (YHNRALRSVAYHPTLPLFASASDDGTVHIFHCTVYTDLMQ), and 799–830 (IDGIGVLDLRWVPGKPWLVSSGADGEVRLWCS).

Belongs to the WD repeat BOP1/ERB1 family. Component of the NOP7 complex, composed of ERB1, NOP7 and YTM1. The complex is held together by ERB1, which interacts with NOP7 via its N-terminal domain and with YTM1 via a high-affinity interaction between the seven-bladed beta-propeller domains of the 2 proteins. The NOP7 complex associates with the 66S pre-ribosome.

The protein localises to the nucleus. It localises to the nucleolus. It is found in the nucleoplasm. In terms of biological role, component of the NOP7 complex, which is required for maturation of the 25S and 5.8S ribosomal RNAs and formation of the 60S ribosome. In Cryptococcus neoformans var. neoformans serotype D (strain JEC21 / ATCC MYA-565) (Filobasidiella neoformans), this protein is Ribosome biogenesis protein ERB1.